The sequence spans 1446 residues: ABC-type transporter oblD (1446 aa).

Residues asparagine 9, asparagine 28, asparagine 222, asparagine 281, and asparagine 305 are each glycosylated (N-linked (GlcNAc...) asparagine). An ABC transporter 1 domain is found at leucine 104–aspartate 357. The next 6 helical transmembrane spans lie at valine 468 to tyrosine 488, alanine 502 to leucine 522, methionine 548 to phenylalanine 568, glycine 577 to phenylalanine 597, alanine 610 to proline 630, and isoleucine 719 to phenylalanine 739. One can recognise an ABC transporter 2 domain in the interval phenylalanine 796–glycine 1038. Glycine 832 to threonine 839 serves as a coordination point for ATP. 5 helical membrane-spanning segments follow: residues alanine 1147–isoleucine 1167, isoleucine 1177–alanine 1197, phenylalanine 1217–phenylalanine 1237, leucine 1265–phenylalanine 1285, and leucine 1301–phenylalanine 1321. 2 N-linked (GlcNAc...) asparagine glycosylation sites follow: asparagine 1344 and asparagine 1359. The helical transmembrane segment at phenylalanine 1412–tryptophan 1432 threads the bilayer.

It belongs to the ABC transporter superfamily. ABCG family. PDR (TC 3.A.1.205) subfamily.

It localises to the cell membrane. In terms of biological role, ABC-type transporter; part of the gene cluster that mediates the biosynthesis of the sesterterpenes ophiobolins, fungal phytotoxins with potential anti-cancer activities. Acts as a specific transporter involved in ophiobolins secretion. This chain is ABC-type transporter oblD, found in Aspergillus clavatus (strain ATCC 1007 / CBS 513.65 / DSM 816 / NCTC 3887 / NRRL 1 / QM 1276 / 107).